Reading from the N-terminus, the 349-residue chain is tRNA pseudouridine synthase D (349 aa).

Phe-26 provides a ligand contact to substrate. Asp-79 (nucleophile) is an active-site residue. Position 128 (Asn-128) interacts with substrate. The TRUD domain occupies 154 to 303 (GVPNYFGSQR…VDAARRAMLV (150 aa)). Residue Phe-329 participates in substrate binding.

It belongs to the pseudouridine synthase TruD family.

The catalysed reaction is uridine(13) in tRNA = pseudouridine(13) in tRNA. In terms of biological role, responsible for synthesis of pseudouridine from uracil-13 in transfer RNAs. The chain is tRNA pseudouridine synthase D from Erwinia tasmaniensis (strain DSM 17950 / CFBP 7177 / CIP 109463 / NCPPB 4357 / Et1/99).